The following is a 181-amino-acid chain: Adenylate kinase (181 aa).

Position 10 to 15 (10 to 15 (GAGKGT)) interacts with ATP. The tract at residues 30–59 (STGDLFRANISQQTPLGREAQKYMDAGDLV) is NMP. AMP is bound by residues T31, R36, 57 to 59 (DLV), 85 to 88 (GYPR), and Q92. The tract at residues 126 to 132 (ARGRNDD) is LID. ATP is bound at residue R127. AMP-binding residues include R129 and R140. G166 lines the ATP pocket.

Belongs to the adenylate kinase family. As to quaternary structure, monomer.

Its subcellular location is the cytoplasm. It carries out the reaction AMP + ATP = 2 ADP. Its pathway is purine metabolism; AMP biosynthesis via salvage pathway; AMP from ADP: step 1/1. Its function is as follows. Catalyzes the reversible transfer of the terminal phosphate group between ATP and AMP. Plays an important role in cellular energy homeostasis and in adenine nucleotide metabolism. The chain is Adenylate kinase from Nocardia farcinica (strain IFM 10152).